The primary structure comprises 105 residues: DNA-directed RNA polymerase RPB9 homolog (105 aa).

C4, C7, C24, C26, C73, C76, and C96 together coordinate Zn(2+). The C4-type; atypical zinc-finger motif lies at 4–26; it reads CKACSSCMVRTYVDGNIIFRCSC.

Belongs to the Asfivirus DNA-directed RNA polymerase RPB9 homolog family. Part of the viral DNA-directed RNA polymerase that consists of 8 polII-like subunits (RPB1, RPB2, RPB3, RPB5, RPB6, RPB7, RPB9, RPB10), a capping enzyme and a termination factor.

Its subcellular location is the host cytoplasm. In terms of biological role, component of the DNA-directed RNA polymerase (RNAP) that catalyzes the transcription in the cytoplasm of viral DNA into RNA using the four ribonucleoside triphosphates as substrates. This chain is DNA-directed RNA polymerase RPB9 homolog, found in African swine fever virus (isolate Pig/Kenya/KEN-50/1950) (ASFV).